Consider the following 362-residue polypeptide: Ferredoxin--NADP reductase, leaf-type isozyme, chloroplastic (362 aa).

A disordered region spans residues 1-20 (MATAVSAAVSLPSSKSTSFS). Residues 1 to 62 (MATAVSAAVS…RAQVTTEAPA (62 aa)) constitute a chloroplast transit peptide. Positions 10 to 20 (SLPSSKSTSFS) are enriched in low complexity. Residues 83-205 (KEPYVGRCLL…TGPVGKEMLM (123 aa)) enclose the FAD-binding FR-type domain. Residues 141 to 144 (RLYS), 162 to 164 (CVK), Tyr-168, 179 to 181 (VCS), and Thr-220 each bind FAD. Positions 144 and 164 each coordinate NADP(+). Residues Thr-220, 252–253 (VP), 282–283 (SR), Lys-292, 321–322 (GL), and Glu-360 each bind NADP(+).

Belongs to the ferredoxin--NADP reductase type 1 family. The cofactor is FAD.

The protein localises to the plastid. Its subcellular location is the chloroplast stroma. It is found in the chloroplast thylakoid membrane. The enzyme catalyses 2 reduced [2Fe-2S]-[ferredoxin] + NADP(+) + H(+) = 2 oxidized [2Fe-2S]-[ferredoxin] + NADPH. It functions in the pathway energy metabolism; photosynthesis. May play a key role in regulating the relative amounts of cyclic and non-cyclic electron flow to meet the demands of the plant for ATP and reducing power. This chain is Ferredoxin--NADP reductase, leaf-type isozyme, chloroplastic (PETH), found in Nicotiana tabacum (Common tobacco).